The chain runs to 169 residues: Lipoprotein signal peptidase (169 aa).

Transmembrane regions (helical) follow at residues leucine 10–phenylalanine 30, valine 41–phenylalanine 61, tryptophan 68–leucine 88, and glycine 94–tyrosine 114. Residues aspartate 124 and aspartate 143 contribute to the active site. The helical transmembrane segment at tyrosine 135 to leucine 155 threads the bilayer.

The protein belongs to the peptidase A8 family.

Its subcellular location is the cell inner membrane. The catalysed reaction is Release of signal peptides from bacterial membrane prolipoproteins. Hydrolyzes -Xaa-Yaa-Zaa-|-(S,diacylglyceryl)Cys-, in which Xaa is hydrophobic (preferably Leu), and Yaa (Ala or Ser) and Zaa (Gly or Ala) have small, neutral side chains.. It participates in protein modification; lipoprotein biosynthesis (signal peptide cleavage). Its function is as follows. This protein specifically catalyzes the removal of signal peptides from prolipoproteins. The chain is Lipoprotein signal peptidase from Pseudomonas paraeruginosa (strain DSM 24068 / PA7) (Pseudomonas aeruginosa (strain PA7)).